Here is an 898-residue protein sequence, read N- to C-terminus: Nitrate reductase [NAD(P)H] (898 aa).

The span at 1–15 (MAASVENRRFTHHEP) shows a compositional bias: basic and acidic residues. The tract at residues 1–65 (MAASVENRRF…SSSEDENEND (65 aa)) is disordered. Position 180 (Cys180) interacts with Mo-molybdopterin. Residues 528 to 603 (SKMFSMSEVK…LEDYRIGELI (76 aa)) enclose the Cytochrome b5 heme-binding domain. The heme site is built by His563 and His586. The FAD-binding FR-type domain maps to 642 to 754 (GAKIPTKLVY…KGPLGHVEYT (113 aa)). Residues 694-697 (RAYT), 711-715 (VVKIY), Phe716, Phe723, 728-730 (LMS), and Thr781 contribute to the FAD site.

This sequence belongs to the nitrate reductase family. Homodimer. It depends on FAD as a cofactor. Heme serves as cofactor. Requires Mo-molybdopterin as cofactor.

It catalyses the reaction nitrite + NAD(+) + H2O = nitrate + NADH + H(+). The catalysed reaction is nitrite + NADP(+) + H2O = nitrate + NADPH + H(+). In terms of biological role, nitrate reductase is a key enzyme involved in the first step of nitrate assimilation in plants, fungi and bacteria. This Betula pendula (European white birch) protein is Nitrate reductase [NAD(P)H] (NIA1).